The following is a 255-amino-acid chain: MLMAVDIGNTNIVIGFLEGDRIVGSYRITTKATHTSDEYGLMITQFLALSDYTADDVDDVIVCSVVPKVMYSFRASLIKFLGLEPMVVGPGVKTGMNIRLDDPKTLGSDCIADCAGAYHTYGGPVLVADFGTATTFNYVDSSGTIRSGFITTGIRTGAEALWGQTAQLPEVEITQPQSILATNTRTAMQAGLYYTFLGGIERTIQQFRKEIDEPFQVVATGGLSRIFKNNTDMIDVYDSDLIFKGMAYIYSRNVK.

Residue 6 to 13 (DIGNTNIV) coordinates ATP. Residue 107-110 (GSDC) coordinates substrate. Catalysis depends on aspartate 109, which acts as the Proton acceptor. K(+) is bound at residue aspartate 129. Threonine 132 contacts ATP. Position 184 (threonine 184) interacts with substrate.

Belongs to the type III pantothenate kinase family. As to quaternary structure, homodimer. The cofactor is NH4(+). Requires K(+) as cofactor.

Its subcellular location is the cytoplasm. The enzyme catalyses (R)-pantothenate + ATP = (R)-4'-phosphopantothenate + ADP + H(+). It participates in cofactor biosynthesis; coenzyme A biosynthesis; CoA from (R)-pantothenate: step 1/5. Catalyzes the phosphorylation of pantothenate (Pan), the first step in CoA biosynthesis. The chain is Type III pantothenate kinase from Bifidobacterium longum subsp. infantis (strain ATCC 15697 / DSM 20088 / JCM 1222 / NCTC 11817 / S12).